The chain runs to 220 residues: Probable septum site-determining protein MinC (220 aa).

The protein belongs to the MinC family. Interacts with MinD and FtsZ.

In terms of biological role, cell division inhibitor that blocks the formation of polar Z ring septums. Rapidly oscillates between the poles of the cell to destabilize FtsZ filaments that have formed before they mature into polar Z rings. Prevents FtsZ polymerization. The chain is Probable septum site-determining protein MinC from Vibrio campbellii (strain ATCC BAA-1116).